The sequence spans 202 residues: Small ribosomal subunit protein uS5 (202 aa).

Residues 50-113 (LKQELLNVNI…REAKLNLIPV (64 aa)) enclose the S5 DRBM domain.

It belongs to the universal ribosomal protein uS5 family. In terms of assembly, part of the 30S ribosomal subunit. Contacts protein S4.

Functionally, with S4 and S12 plays an important role in translational accuracy. The protein is Small ribosomal subunit protein uS5 of Pyrobaculum arsenaticum (strain DSM 13514 / JCM 11321 / PZ6).